A 264-amino-acid chain; its full sequence is uncharacterized protein (264 aa).

A signal peptide spans 1–22; the sequence is MGYLKKLALFISVIILGIFIIG. Cys23 is lipidated: N-palmitoyl cysteine. Cys23 is lipidated: S-diacylglycerol cysteine.

It belongs to the staphylococcal tandem lipoprotein family.

It is found in the cell membrane. This is an uncharacterized protein from Staphylococcus aureus (strain N315).